Here is a 643-residue protein sequence, read N- to C-terminus: Hypoxia up-regulated protein 1 (643 aa).

A signal peptide spans 1–22 (MRPLVCVFTMFLLALLSSNTES). Residues 565–643 (LGNTISSLFG…EEEKSEPQEE (79 aa)) are disordered. Residues 590–610 (VQEEDEVPTEPTKEEEQESAD) are compositionally biased toward acidic residues. Composition is skewed to basic and acidic residues over residues 611-621 (AADKQKDKEKG) and 630-643 (EGKK…PQEE).

This sequence belongs to the heat shock protein 70 family.

The protein localises to the endoplasmic reticulum lumen. Functionally, has a pivotal role in cytoprotective cellular mechanisms triggered by oxygen deprivation. May play a role as a molecular chaperone and participate in protein folding. The chain is Hypoxia up-regulated protein 1 (hyou1) from Xenopus tropicalis (Western clawed frog).